The chain runs to 492 residues: Bifunctional purine biosynthesis protein PurH (492 aa).

An MGS-like domain is found at 1–144 (MRKALLSVSD…KNFRHVITVV (144 aa)).

The protein belongs to the PurH family.

The enzyme catalyses (6R)-10-formyltetrahydrofolate + 5-amino-1-(5-phospho-beta-D-ribosyl)imidazole-4-carboxamide = 5-formamido-1-(5-phospho-D-ribosyl)imidazole-4-carboxamide + (6S)-5,6,7,8-tetrahydrofolate. It carries out the reaction IMP + H2O = 5-formamido-1-(5-phospho-D-ribosyl)imidazole-4-carboxamide. Its pathway is purine metabolism; IMP biosynthesis via de novo pathway; 5-formamido-1-(5-phospho-D-ribosyl)imidazole-4-carboxamide from 5-amino-1-(5-phospho-D-ribosyl)imidazole-4-carboxamide (10-formyl THF route): step 1/1. The protein operates within purine metabolism; IMP biosynthesis via de novo pathway; IMP from 5-formamido-1-(5-phospho-D-ribosyl)imidazole-4-carboxamide: step 1/1. This Macrococcus caseolyticus (strain JCSC5402) (Macrococcoides caseolyticum) protein is Bifunctional purine biosynthesis protein PurH.